Here is a 444-residue protein sequence, read N- to C-terminus: tRNA modification GTPase MnmE (444 aa).

Positions 24, 81, and 121 each coordinate (6S)-5-formyl-5,6,7,8-tetrahydrofolate. Residues 218 to 368 (GLTVVIAGPP…LLDALVGFAR (151 aa)) enclose the TrmE-type G domain. GTP is bound by residues 228–233 (NAGKST), 247–253 (SPQAGTT), 272–275 (DTAG), and 349–351 (SAR). Mg(2+) contacts are provided by Ser232 and Thr253. (6S)-5-formyl-5,6,7,8-tetrahydrofolate is bound at residue Lys444.

The protein belongs to the TRAFAC class TrmE-Era-EngA-EngB-Septin-like GTPase superfamily. TrmE GTPase family. In terms of assembly, homodimer. Heterotetramer of two MnmE and two MnmG subunits. K(+) is required as a cofactor.

It localises to the cytoplasm. Exhibits a very high intrinsic GTPase hydrolysis rate. Involved in the addition of a carboxymethylaminomethyl (cmnm) group at the wobble position (U34) of certain tRNAs, forming tRNA-cmnm(5)s(2)U34. This chain is tRNA modification GTPase MnmE, found in Bradyrhizobium sp. (strain ORS 278).